Consider the following 339-residue polypeptide: Ketol-acid reductoisomerase (NADP(+)) (339 aa).

The 182-residue stretch at 1-182 (MRVYYDRDAD…GGGRAGIIET (182 aa)) folds into the KARI N-terminal Rossmann domain. NADP(+) is bound by residues 24 to 27 (YGSQ), R48, S51, T53, and 83 to 86 (DELQ). The active site involves H108. G134 provides a ligand contact to NADP(+). Positions 183-328 (SFKEECETDL…AKLRDMMPWI (146 aa)) constitute a KARI C-terminal knotted domain. Mg(2+) is bound by residues D191, E195, E227, and E231. S252 is a substrate binding site.

Belongs to the ketol-acid reductoisomerase family. It depends on Mg(2+) as a cofactor.

It catalyses the reaction (2R)-2,3-dihydroxy-3-methylbutanoate + NADP(+) = (2S)-2-acetolactate + NADPH + H(+). It carries out the reaction (2R,3R)-2,3-dihydroxy-3-methylpentanoate + NADP(+) = (S)-2-ethyl-2-hydroxy-3-oxobutanoate + NADPH + H(+). It participates in amino-acid biosynthesis; L-isoleucine biosynthesis; L-isoleucine from 2-oxobutanoate: step 2/4. The protein operates within amino-acid biosynthesis; L-valine biosynthesis; L-valine from pyruvate: step 2/4. Functionally, involved in the biosynthesis of branched-chain amino acids (BCAA). Catalyzes an alkyl-migration followed by a ketol-acid reduction of (S)-2-acetolactate (S2AL) to yield (R)-2,3-dihydroxy-isovalerate. In the isomerase reaction, S2AL is rearranged via a Mg-dependent methyl migration to produce 3-hydroxy-3-methyl-2-ketobutyrate (HMKB). In the reductase reaction, this 2-ketoacid undergoes a metal-dependent reduction by NADPH to yield (R)-2,3-dihydroxy-isovalerate. This is Ketol-acid reductoisomerase (NADP(+)) from Rhodopseudomonas palustris (strain HaA2).